The primary structure comprises 568 residues: Urease subunit alpha (568 aa).

Residues 130–568 (GGIDTHIHFI…LPMAQRYFLF (439 aa)) form the Urease domain. Ni(2+) contacts are provided by His135, His137, and Lys218. Lys218 carries the post-translational modification N6-carboxylysine. His220 contributes to the substrate binding site. His247 and His273 together coordinate Ni(2+). His321 serves as the catalytic Proton donor. Ni(2+) is bound at residue Asp361.

This sequence belongs to the metallo-dependent hydrolases superfamily. Urease alpha subunit family. In terms of assembly, heterotrimer of UreA (gamma), UreB (beta) and UreC (alpha) subunits. Three heterotrimers associate to form the active enzyme. Ni cation is required as a cofactor. Post-translationally, carboxylation allows a single lysine to coordinate two nickel ions.

The protein resides in the cytoplasm. The enzyme catalyses urea + 2 H2O + H(+) = hydrogencarbonate + 2 NH4(+). Its pathway is nitrogen metabolism; urea degradation; CO(2) and NH(3) from urea (urease route): step 1/1. This is Urease subunit alpha from Burkholderia mallei (strain NCTC 10247).